The primary structure comprises 228 residues: PKHD-type hydroxylase Rmet_0838 (228 aa).

Residues 78-179 (RVLPPMFNRY…RWASFFWAQS (102 aa)) enclose the Fe2OG dioxygenase domain. Fe cation-binding residues include histidine 96, aspartate 98, and histidine 160. Residue arginine 170 participates in 2-oxoglutarate binding.

It depends on Fe(2+) as a cofactor. The cofactor is L-ascorbate.

The chain is PKHD-type hydroxylase Rmet_0838 from Cupriavidus metallidurans (strain ATCC 43123 / DSM 2839 / NBRC 102507 / CH34) (Ralstonia metallidurans).